The chain runs to 505 residues: Nicotinamide phosphoribosyltransferase (505 aa).

Arginine 196 serves as a coordination point for diphosphate. Aspartate 219 lines the beta-nicotinamide D-ribonucleotide pocket. 2 residues coordinate diphosphate: histidine 246 and arginine 314. Beta-nicotinamide D-ribonucleotide is bound by residues 314 to 316 (RPD), 369 to 370 (GD), and arginine 408.

Belongs to the NAPRTase family.

It catalyses the reaction beta-nicotinamide D-ribonucleotide + diphosphate = 5-phospho-alpha-D-ribose 1-diphosphate + nicotinamide + H(+). It participates in cofactor biosynthesis; NAD(+) biosynthesis; nicotinamide D-ribonucleotide from 5-phospho-alpha-D-ribose 1-diphosphate and nicotinamide: step 1/1. Its activity is regulated as follows. 10-fold more active in the presence of saturating ATP. In terms of biological role, catalyzes the condensation of nicotinamide with 5-phosphoribosyl-1-pyrophosphate to yield nicotinamide mononucleotide, an intermediate in the biosynthesis of NAD. Functions in the nondeamidating salvage pathway for production of NAD from nicotinamide. Displays a strict preference for nicotinamide over nicotinate substrate. In Acinetobacter baylyi (strain ATCC 33305 / BD413 / ADP1), this protein is Nicotinamide phosphoribosyltransferase.